The following is an 873-amino-acid chain: DNA mismatch repair protein MutS (873 aa).

Gly-628–Ser-635 contributes to the ATP binding site.

This sequence belongs to the DNA mismatch repair MutS family.

This protein is involved in the repair of mismatches in DNA. It is possible that it carries out the mismatch recognition step. This protein has a weak ATPase activity. The chain is DNA mismatch repair protein MutS from Chlorobium chlorochromatii (strain CaD3).